Reading from the N-terminus, the 1017-residue chain is Pikachurin (1017 aa).

A signal peptide spans 1–24; that stretch reads MDLIRGVLLRLLLLASSLGPGAVS. 2 Fibronectin type-III domains span residues 37–136 and 144–239; these read PPLD…TLSQ and APQQ…TLCP. Asparagine 47 carries N-linked (GlcNAc...) asparagine glycosylation. The EGF-like 1 domain occupies 343 to 381; that stretch reads FDMPCDETLCSADSFCVNDYTWGGSRCQCTLGKGGESCS. 11 disulfides stabilise this stretch: cysteine 347/cysteine 358, cysteine 352/cysteine 369, cysteine 371/cysteine 380, cysteine 534/cysteine 564, cysteine 569/cysteine 580, cysteine 574/cysteine 590, cysteine 592/cysteine 601, cysteine 788/cysteine 799, cysteine 793/cysteine 808, cysteine 810/cysteine 819, and cysteine 987/cysteine 1014. The Laminin G-like 1 domain maps to 386 to 564; sequence IQYPQFFGHS…ALSGADVGEC (179 aa). EGF-like domains lie at 565–602 and 784–820; these read SSGI…RHCE and AAHP…LHCQ. The Laminin G-like 2 domain occupies 609–788; the sequence is IPQFRESLRS…VNVENAAHPC (180 aa). Residues 835 to 1014 enclose the Laminin G-like 3 domain; it reads IEIPQFIGRS…AVDGKNINTC (180 aa).

As to quaternary structure, interacts with DAG1 alpha-dystroglycan. Interacts with GPR158 and GPR179; transsynaptic interaction is required for synaptic organization of photoreceptor cells. In terms of processing, O-glycosylated; contains chondroitin sulfate and heparan sulfate.

Its subcellular location is the secreted. The protein localises to the extracellular space. The protein resides in the extracellular matrix. It is found in the synaptic cleft. It localises to the presynaptic active zone. Functionally, involved in both the retinal photoreceptor ribbon synapse formation and physiological functions of visual perception. Plays a key role in the synaptic organization of photoreceptors by mediating transsynaptic interaction between alpha-dystroglycan and GPR179 on the postsynaptic membrane. Necessary for proper bipolar dendritic tip apposition to the photoreceptor ribbon synapse. Promotes matrix assembly and cell adhesiveness. The sequence is that of Pikachurin (EGFLAM) from Homo sapiens (Human).